Reading from the N-terminus, the 325-residue chain is Lipoyl synthase (325 aa).

Residues cysteine 72, cysteine 77, cysteine 83, cysteine 98, cysteine 102, cysteine 105, and serine 312 each coordinate [4Fe-4S] cluster. The region spanning 84-301 is the Radical SAM core domain; that stretch reads FSSGTATFMI…AEEGMKMGFK (218 aa).

The protein belongs to the radical SAM superfamily. Lipoyl synthase family. It depends on [4Fe-4S] cluster as a cofactor.

It localises to the cytoplasm. The catalysed reaction is [[Fe-S] cluster scaffold protein carrying a second [4Fe-4S](2+) cluster] + N(6)-octanoyl-L-lysyl-[protein] + 2 oxidized [2Fe-2S]-[ferredoxin] + 2 S-adenosyl-L-methionine + 4 H(+) = [[Fe-S] cluster scaffold protein] + N(6)-[(R)-dihydrolipoyl]-L-lysyl-[protein] + 4 Fe(3+) + 2 hydrogen sulfide + 2 5'-deoxyadenosine + 2 L-methionine + 2 reduced [2Fe-2S]-[ferredoxin]. It participates in protein modification; protein lipoylation via endogenous pathway; protein N(6)-(lipoyl)lysine from octanoyl-[acyl-carrier-protein]: step 2/2. Its function is as follows. Catalyzes the radical-mediated insertion of two sulfur atoms into the C-6 and C-8 positions of the octanoyl moiety bound to the lipoyl domains of lipoate-dependent enzymes, thereby converting the octanoylated domains into lipoylated derivatives. In Stutzerimonas stutzeri (strain A1501) (Pseudomonas stutzeri), this protein is Lipoyl synthase.